The sequence spans 307 residues: UDP-3-O-acyl-N-acetylglucosamine deacetylase (307 aa).

Zn(2+)-binding residues include His-78, His-241, and Asp-245. His-268 acts as the Proton donor in catalysis.

This sequence belongs to the LpxC family. Requires Zn(2+) as cofactor.

The enzyme catalyses a UDP-3-O-[(3R)-3-hydroxyacyl]-N-acetyl-alpha-D-glucosamine + H2O = a UDP-3-O-[(3R)-3-hydroxyacyl]-alpha-D-glucosamine + acetate. The protein operates within glycolipid biosynthesis; lipid IV(A) biosynthesis; lipid IV(A) from (3R)-3-hydroxytetradecanoyl-[acyl-carrier-protein] and UDP-N-acetyl-alpha-D-glucosamine: step 2/6. In terms of biological role, catalyzes the hydrolysis of UDP-3-O-myristoyl-N-acetylglucosamine to form UDP-3-O-myristoylglucosamine and acetate, the committed step in lipid A biosynthesis. The polypeptide is UDP-3-O-acyl-N-acetylglucosamine deacetylase (Bordetella avium (strain 197N)).